A 923-amino-acid chain; its full sequence is Isoleucine--tRNA ligase (923 aa).

Residues 57–67 carry the 'HIGH' region motif; that stretch reads PYANGHIHIGH. L-isoleucyl-5'-AMP is bound at residue E560. A 'KMSKS' region motif is present at residues 601–605; that stretch reads KMSKS. An ATP-binding site is contributed by K604. Residues C895, C898, C915, and C918 each coordinate Zn(2+).

The protein belongs to the class-I aminoacyl-tRNA synthetase family. IleS type 1 subfamily. In terms of assembly, monomer. The cofactor is Zn(2+).

The protein resides in the cytoplasm. It catalyses the reaction tRNA(Ile) + L-isoleucine + ATP = L-isoleucyl-tRNA(Ile) + AMP + diphosphate. Its function is as follows. Catalyzes the attachment of isoleucine to tRNA(Ile). As IleRS can inadvertently accommodate and process structurally similar amino acids such as valine, to avoid such errors it has two additional distinct tRNA(Ile)-dependent editing activities. One activity is designated as 'pretransfer' editing and involves the hydrolysis of activated Val-AMP. The other activity is designated 'posttransfer' editing and involves deacylation of mischarged Val-tRNA(Ile). The protein is Isoleucine--tRNA ligase of Geobacter sulfurreducens (strain ATCC 51573 / DSM 12127 / PCA).